The primary structure comprises 286 residues: Putative quercetin 2,3-dioxygenase PA2418 (286 aa).

Positions 61, 63, 105, and 107 each coordinate a divalent metal cation.

This sequence belongs to the pirin family. The cofactor is a divalent metal cation.

It catalyses the reaction quercetin + O2 = 2-(3,4-dihydroxybenzoyloxy)-4,6-dihydroxybenzoate + CO. It participates in flavonoid metabolism; quercetin degradation. Functionally, putative quercetin 2,3-dioxygenase. In Pseudomonas aeruginosa (strain ATCC 15692 / DSM 22644 / CIP 104116 / JCM 14847 / LMG 12228 / 1C / PRS 101 / PAO1), this protein is Putative quercetin 2,3-dioxygenase PA2418.